Consider the following 554-residue polypeptide: Beta-eudesmol synthase (554 aa).

Positions 305, 309, and 456 each coordinate Mg(2+). Residues 305-309 (DDIYD) carry the DDXXD motif motif.

It belongs to the terpene synthase family. The cofactor is Mg(2+). It depends on Mn(2+) as a cofactor. As to expression, expressed in rhizomes. Detected in stems, but not in leaves.

It is found in the cytoplasm. The catalysed reaction is (2E,6E)-farnesyl diphosphate + H2O = beta-eudesmol + diphosphate. It carries out the reaction (2E,6E)-farnesyl diphosphate + H2O = 10-epi-gamma-eudesmol + diphosphate. The enzyme catalyses (2E,6E)-farnesyl diphosphate + H2O = alpha-eudesmol + diphosphate. The protein operates within secondary metabolite biosynthesis; terpenoid biosynthesis. Its function is as follows. Involved in the biosynthesis of beta-eudesmol, a sesquiterpene with antifungal activity and responsible for resistance of plants to ant attack. Produces mainly beta-eudesmol, but also smaller amounts of 10-epi-gamma-eudesmol, alpha-eudesmol and aristolene. This chain is Beta-eudesmol synthase (ZSS2), found in Zingiber zerumbet (Shampoo ginger).